Reading from the N-terminus, the 352-residue chain is Holliday junction branch migration complex subunit RuvB (352 aa).

The segment at 4–191 (TDKLAAPARV…FGIVARLEFY (188 aa)) is large ATPase domain (RuvB-L). ATP is bound by residues leucine 30, arginine 31, glycine 72, lysine 75, threonine 76, threonine 77, 138–140 (EDY), arginine 181, tyrosine 191, and arginine 228. Position 76 (threonine 76) interacts with Mg(2+). A small ATPAse domain (RuvB-S) region spans residues 192 to 262 (TADELARIVT…MADAALAMLD (71 aa)). The head domain (RuvB-H) stretch occupies residues 265 to 352 (SVGFDLMDRK…SGASELFGDA (88 aa)). DNA is bound by residues arginine 301, arginine 320, and arginine 325.

This sequence belongs to the RuvB family. As to quaternary structure, homohexamer. Forms an RuvA(8)-RuvB(12)-Holliday junction (HJ) complex. HJ DNA is sandwiched between 2 RuvA tetramers; dsDNA enters through RuvA and exits via RuvB. An RuvB hexamer assembles on each DNA strand where it exits the tetramer. Each RuvB hexamer is contacted by two RuvA subunits (via domain III) on 2 adjacent RuvB subunits; this complex drives branch migration. In the full resolvosome a probable DNA-RuvA(4)-RuvB(12)-RuvC(2) complex forms which resolves the HJ.

It localises to the cytoplasm. The enzyme catalyses ATP + H2O = ADP + phosphate + H(+). In terms of biological role, the RuvA-RuvB-RuvC complex processes Holliday junction (HJ) DNA during genetic recombination and DNA repair, while the RuvA-RuvB complex plays an important role in the rescue of blocked DNA replication forks via replication fork reversal (RFR). RuvA specifically binds to HJ cruciform DNA, conferring on it an open structure. The RuvB hexamer acts as an ATP-dependent pump, pulling dsDNA into and through the RuvAB complex. RuvB forms 2 homohexamers on either side of HJ DNA bound by 1 or 2 RuvA tetramers; 4 subunits per hexamer contact DNA at a time. Coordinated motions by a converter formed by DNA-disengaged RuvB subunits stimulates ATP hydrolysis and nucleotide exchange. Immobilization of the converter enables RuvB to convert the ATP-contained energy into a lever motion, pulling 2 nucleotides of DNA out of the RuvA tetramer per ATP hydrolyzed, thus driving DNA branch migration. The RuvB motors rotate together with the DNA substrate, which together with the progressing nucleotide cycle form the mechanistic basis for DNA recombination by continuous HJ branch migration. Branch migration allows RuvC to scan DNA until it finds its consensus sequence, where it cleaves and resolves cruciform DNA. The chain is Holliday junction branch migration complex subunit RuvB from Cupriavidus necator (strain ATCC 17699 / DSM 428 / KCTC 22496 / NCIMB 10442 / H16 / Stanier 337) (Ralstonia eutropha).